Here is a 162-residue protein sequence, read N- to C-terminus: 2-C-methyl-D-erythritol 2,4-cyclodiphosphate synthase (162 aa).

Residues aspartate 12 and histidine 14 each coordinate a divalent metal cation. 4-CDP-2-C-methyl-D-erythritol 2-phosphate is bound by residues aspartate 12–histidine 14 and histidine 38–serine 39. An a divalent metal cation-binding site is contributed by histidine 46. 4-CDP-2-C-methyl-D-erythritol 2-phosphate contacts are provided by residues aspartate 60–glycine 62, phenylalanine 65–aspartate 69, and arginine 146.

It belongs to the IspF family. Homotrimer. The cofactor is a divalent metal cation.

It catalyses the reaction 4-CDP-2-C-methyl-D-erythritol 2-phosphate = 2-C-methyl-D-erythritol 2,4-cyclic diphosphate + CMP. It participates in isoprenoid biosynthesis; isopentenyl diphosphate biosynthesis via DXP pathway; isopentenyl diphosphate from 1-deoxy-D-xylulose 5-phosphate: step 4/6. Involved in the biosynthesis of isopentenyl diphosphate (IPP) and dimethylallyl diphosphate (DMAPP), two major building blocks of isoprenoid compounds. Catalyzes the conversion of 4-diphosphocytidyl-2-C-methyl-D-erythritol 2-phosphate (CDP-ME2P) to 2-C-methyl-D-erythritol 2,4-cyclodiphosphate (ME-CPP) with a corresponding release of cytidine 5-monophosphate (CMP). This is 2-C-methyl-D-erythritol 2,4-cyclodiphosphate synthase from Bordetella avium (strain 197N).